A 349-amino-acid polypeptide reads, in one-letter code: DCD domain-containing protein NRP (349 aa).

Residues Asn-157 to Phe-201 form a disordered region. The span at Arg-188–Phe-201 shows a compositional bias: basic and acidic residues. Residues Glu-214 to Asp-346 enclose the DCD domain.

In terms of assembly, interacts with CRY2 in the cytoplasm. Interacts with Verticillium dahliae PevD1. Interacts with FYPP3. As to expression, highly expressed in sensecent leaves, cauline leaves and sepals. Expressed in the shoot apical meristem, leaf veins, central cylinder, root hair zone, root tips, rosette leaves, flowers and siliques.

Its subcellular location is the cytoplasm. Its function is as follows. Contributes to the initial phase of responses to abiotic and biotic stress signals. Binds FYPP3 and facilitates FYPP3 degradation to promote abscisic acid (ABA) response. The protein is DCD domain-containing protein NRP of Arabidopsis thaliana (Mouse-ear cress).